We begin with the raw amino-acid sequence, 168 residues long: Cyclic pyranopterin monophosphate synthase (168 aa).

Residues 83-85 and 121-122 contribute to the substrate site; these read LCH and ME. Aspartate 136 is a catalytic residue.

It belongs to the MoaC family. Homohexamer; trimer of dimers.

It catalyses the reaction (8S)-3',8-cyclo-7,8-dihydroguanosine 5'-triphosphate = cyclic pyranopterin phosphate + diphosphate. Its pathway is cofactor biosynthesis; molybdopterin biosynthesis. Its function is as follows. Catalyzes the conversion of (8S)-3',8-cyclo-7,8-dihydroguanosine 5'-triphosphate to cyclic pyranopterin monophosphate (cPMP). This is Cyclic pyranopterin monophosphate synthase from Nostoc sp. (strain PCC 7120 / SAG 25.82 / UTEX 2576).